The sequence spans 356 residues: ADP-ribosylhydrolase ARH3 (356 aa).

Mg(2+) contacts are provided by Asp-26, Glu-33, Thr-62, Asp-63, and Asp-64. Asp-63 lines the substrate pocket. Substrate-binding positions include 132-138 (KGSYGNG), His-168, and Ile-260. Residues Asp-303, Asp-305, and Thr-306 each coordinate Mg(2+).

This sequence belongs to the ADP-ribosylglycohydrolase family. Monomer. Mg(2+) is required as a cofactor. The cofactor is Mn(2+).

The protein localises to the nucleus. Its subcellular location is the cytoplasm. The protein resides in the chromosome. It localises to the mitochondrion matrix. The enzyme catalyses [(1''-&gt;2')-ADP-alpha-D-ribose](n) + H2O = [(1''-&gt;2')-ADP-alpha-D-ribose](n-1) + ADP-D-ribose. It carries out the reaction 1''-O-acetyl-ADP-alpha-D-ribose + H2O = ADP-D-ribose + acetate + H(+). The catalysed reaction is O-(ADP-D-ribosyl)-L-seryl-[protein] + H2O = ADP-D-ribose + L-seryl-[protein]. It catalyses the reaction alpha-NAD(+) + H2O = ADP-D-ribose + nicotinamide + H(+). Its activity is regulated as follows. The protein undergoes a dramatic conformational switch from closed to open states upon substrate-binding, which enables specific substrate recognition for the 1''-O-linkage. The glutamate flap (Glu-33) blocks substrate entrance to Mg(2+) in the unliganded closed state. In presence of substrate, Glu-33 is ejected from the active site: this closed-to-open transition significantly widens the substrate-binding channel and precisely positions the scissile 1''-O-linkage for cleavage while securing tightly 2'- and 3'-hydroxyls of ADP-ribose. Activity is inhibited by calcium. In terms of biological role, ADP-ribosylhydrolase that preferentially hydrolyzes the scissile alpha-O-linkage attached to the anomeric C1'' position of ADP-ribose and acts on different substrates, such as proteins ADP-ribosylated on serine and threonine, free poly(ADP-ribose) and O-acetyl-ADP-D-ribose. Specifically acts as a serine mono-ADP-ribosylhydrolase by mediating the removal of mono-ADP-ribose attached to serine residues on proteins, thereby playing a key role in DNA damage response. Serine ADP-ribosylation of proteins constitutes the primary form of ADP-ribosylation of proteins in response to DNA damage. Does not hydrolyze ADP-ribosyl-arginine, -cysteine, -diphthamide, or -asparagine bonds. Also able to degrade protein free poly(ADP-ribose), which is synthesized in response to DNA damage: free poly(ADP-ribose) acts as a potent cell death signal and its degradation by ADPRHL2 protects cells from poly(ADP-ribose)-dependent cell death, a process named parthanatos. Also hydrolyzes free poly(ADP-ribose) in mitochondria. Specifically digests O-acetyl-ADP-D-ribose, a product of deacetylation reactions catalyzed by sirtuins. Specifically degrades 1''-O-acetyl-ADP-D-ribose isomer, rather than 2''-O-acetyl-ADP-D-ribose or 3''-O-acetyl-ADP-D-ribose isomers. In Latimeria chalumnae (Coelacanth), this protein is ADP-ribosylhydrolase ARH3 (adprs).